A 408-amino-acid polypeptide reads, in one-letter code: MHKKTLLATLILGLLAGQAVAAPYLPLASDHRNGEVQTASNAWLEVDLGAFEHNIQTLKDRLGDKGPKICAIMKADAYGHGIDLLVPSVVKAGIPCIGIASNEEARVAREKGFTGRLMRVRAATPAEVEQALPYKMEELIGSLVSAQGIADIAQRHHTNIPVHIALNSAGMSRNGIDLRLADSKEDALAMLKLKGITPVGIMTHFPVEEKEDVKMGLAQFKLDSQWLLEAGKLDRSKITIHAANSFATLEVPDAYFDMVRPGGLLYGDSIPSYTEYKRVMAFKTQVASVNHYPAGNTVGYDRTFTLKRDSWLANLPLGYSDGYRRALSNKAYVLIQGQKVPVVGKTSMNTIMVDVTDLKGVKPGDEVVLFGRQGEAEVKQADLEEYNGALLADMYTIWGYTNPKKIKR.

A signal peptide spans Met1–Ala21. The cysteines at positions 70 and 96 are disulfide-linked. Lys74 functions as the Proton acceptor in the catalytic mechanism. An N6-(pyridoxal phosphate)lysine modification is found at Lys74. Arg173 serves as a coordination point for substrate. Tyr300 (proton acceptor) is an active-site residue. Met348 contributes to the substrate binding site.

Belongs to the alanine racemase family. Bsr subfamily. In terms of assembly, homodimer. Requires pyridoxal 5'-phosphate as cofactor.

Its subcellular location is the periplasm. It carries out the reaction an L-alpha-amino acid = a D-alpha-amino acid. It catalyses the reaction L-lysine = D-lysine. The enzyme catalyses L-arginine = D-arginine. The catalysed reaction is L-alanine = D-alanine. It carries out the reaction L-serine = D-serine. It catalyses the reaction L-methionine = D-methionine. The enzyme catalyses L-leucine = D-leucine. The catalysed reaction is L-cysteine = D-cysteine. It carries out the reaction L-glutamine = D-glutamine. It catalyses the reaction L-asparagine = D-asparagine. The enzyme catalyses L-histidine = D-histidine. Amino-acid racemase able to utilize a broad range of substrates. Reversibly racemizes ten of the 19 natural chiral amino acids known, including both non-beta-branched aliphatic amino acids (Ala, Leu, Met, Ser, Cys, Gln and Asn) and positively charged amino acids (His, Lys and Arg). Is not active on negatively charged (Glu and Asp) or aromatic (Tyr, Trp and Phe) amino acids and displays minimal activity towards beta-branched aliphatic (Ile, Val and Thr) substrates. Enables bacteria to produce and release extracellular non-canonical D-amino acids (NCDAAs) that regulate diverse cellular processes. In Aeromonas hydrophila subsp. hydrophila (strain ATCC 7966 / DSM 30187 / BCRC 13018 / CCUG 14551 / JCM 1027 / KCTC 2358 / NCIMB 9240 / NCTC 8049), this protein is Broad specificity amino-acid racemase.